Here is a 119-residue protein sequence, read N- to C-terminus: Ribonuclease P protein component (119 aa).

This sequence belongs to the RnpA family. As to quaternary structure, consists of a catalytic RNA component (M1 or rnpB) and a protein subunit.

The catalysed reaction is Endonucleolytic cleavage of RNA, removing 5'-extranucleotides from tRNA precursor.. Functionally, RNaseP catalyzes the removal of the 5'-leader sequence from pre-tRNA to produce the mature 5'-terminus. It can also cleave other RNA substrates such as 4.5S RNA. The protein component plays an auxiliary but essential role in vivo by binding to the 5'-leader sequence and broadening the substrate specificity of the ribozyme. The sequence is that of Ribonuclease P protein component from Haemophilus influenzae (strain 86-028NP).